Reading from the N-terminus, the 473-residue chain is Bifunctional protein HldE (473 aa).

The tract at residues 1–317 is ribokinase; that stretch reads MKLSMPRFDQ…RRAVQREQGS (317 aa). 194 to 197 lines the ATP pocket; the sequence is NLSE. The active site involves D263. Residues 343 to 473 form a cytidylyltransferase region; the sequence is FTNGCFDILH…TAIVEKIRQR (131 aa).

In the N-terminal section; belongs to the carbohydrate kinase PfkB family. It in the C-terminal section; belongs to the cytidylyltransferase family. In terms of assembly, homodimer.

The enzyme catalyses D-glycero-beta-D-manno-heptose 7-phosphate + ATP = D-glycero-beta-D-manno-heptose 1,7-bisphosphate + ADP + H(+). The catalysed reaction is D-glycero-beta-D-manno-heptose 1-phosphate + ATP + H(+) = ADP-D-glycero-beta-D-manno-heptose + diphosphate. It participates in nucleotide-sugar biosynthesis; ADP-L-glycero-beta-D-manno-heptose biosynthesis; ADP-L-glycero-beta-D-manno-heptose from D-glycero-beta-D-manno-heptose 7-phosphate: step 1/4. Its pathway is nucleotide-sugar biosynthesis; ADP-L-glycero-beta-D-manno-heptose biosynthesis; ADP-L-glycero-beta-D-manno-heptose from D-glycero-beta-D-manno-heptose 7-phosphate: step 3/4. Catalyzes the phosphorylation of D-glycero-D-manno-heptose 7-phosphate at the C-1 position to selectively form D-glycero-beta-D-manno-heptose-1,7-bisphosphate. Its function is as follows. Catalyzes the ADP transfer from ATP to D-glycero-beta-D-manno-heptose 1-phosphate, yielding ADP-D-glycero-beta-D-manno-heptose. The chain is Bifunctional protein HldE from Pseudomonas aeruginosa (strain LESB58).